Consider the following 143-residue polypeptide: Cytochrome c-type biogenesis protein CcmE (143 aa).

The Cytoplasmic portion of the chain corresponds to 1 to 8; the sequence is MTPVRRRK. Residues 9–29 form a helical; Signal-anchor for type II membrane protein membrane-spanning segment; that stretch reads LFILLFALSVLSAAAALVLYA. At 30-143 the chain is on the periplasmic side; sequence LRQNISLFYT…KSALADKVKQ (114 aa). The heme site is built by His-124 and Tyr-128.

Belongs to the CcmE/CycJ family.

It localises to the cell inner membrane. Functionally, heme chaperone required for the biogenesis of c-type cytochromes. Transiently binds heme delivered by CcmC and transfers the heme to apo-cytochromes in a process facilitated by CcmF and CcmH. This chain is Cytochrome c-type biogenesis protein CcmE, found in Legionella pneumophila (strain Lens).